Reading from the N-terminus, the 260-residue chain is 5'-nucleotidase SurE (260 aa).

4 residues coordinate a divalent metal cation: aspartate 8, aspartate 9, serine 39, and asparagine 93.

This sequence belongs to the SurE nucleotidase family. Requires a divalent metal cation as cofactor.

Its subcellular location is the cytoplasm. The enzyme catalyses a ribonucleoside 5'-phosphate + H2O = a ribonucleoside + phosphate. In terms of biological role, nucleotidase that shows phosphatase activity on nucleoside 5'-monophosphates. In Thermofilum pendens (strain DSM 2475 / Hrk 5), this protein is 5'-nucleotidase SurE.